Here is a 913-residue protein sequence, read N- to C-terminus: Trafficking kinesin-binding protein 2 (913 aa).

Over residues 11-21 (SQTGEENLMSS) the composition is skewed to polar residues. The interval 11-31 (SQTGEENLMSSNHRDSESITD) is disordered. An HAP1 N-terminal domain is found at 48–353 (EEQLPQYKLR…QEEIKELRNK (306 aa)). The stretch at 134 to 355 (QALLKRNHVL…EIKELRNKAG (222 aa)) forms a coiled coil. An interaction with HGS region spans residues 359 to 507 (HLCFSQAYGV…KQFFAEEWER (149 aa)). The tract at residues 442–478 (ESGVQQTEDKTLPNQGSSTEVPGNSHPRDPPGLPEDS) is disordered. Residues 453–463 (LPNQGSSTEVP) are compositionally biased toward polar residues. Positions 502-519 (AEEWERKLQILAEQEEEV) form a coiled coil. Composition is skewed to low complexity over residues 688–704 (SSGF…GSAS) and 780–789 (PSQSPCSSPV). Disordered regions lie at residues 688–707 (SSGF…SNTA) and 769–790 (ALAT…SPVP).

The protein belongs to the milton family. In terms of assembly, interacts with RHOT1/Miro-1 and RHOT2/Miro-2. Interacts with GABA-A receptor and O-GlcNAc transferase. Interacts with HGS. O-glycosylated. As to expression, present in heart and brain (at protein level).

It localises to the cytoplasm. Its subcellular location is the early endosome. The protein resides in the mitochondrion. Functionally, may regulate endosome-to-lysosome trafficking of membrane cargo, including EGFR. The chain is Trafficking kinesin-binding protein 2 (Trak2) from Rattus norvegicus (Rat).